Reading from the N-terminus, the 177-residue chain is VQ motif-containing protein 11 (177 aa).

The VQ motif lies at 25–34 (FRNIVQKLTG). A phosphoserine mark is found at Ser43, Ser99, Ser115, Ser142, and Ser145. Residues 115–133 (SAREEHHAQPDKEEQKAIA) show a composition bias toward basic and acidic residues. Residues 115–177 (SAREEHHAQP…RIHEDNHRDS (63 aa)) are disordered. Low complexity predominate over residues 148-159 (EPAPELLPLFPL). At Ser161 the chain carries Phosphoserine. Basic and acidic residues predominate over residues 168 to 177 (RIHEDNHRDS).

Post-translationally, phosphorylated on serine residues by MPK6.

It is found in the nucleus. May modulate WRKY transcription factor activities. The polypeptide is VQ motif-containing protein 11 (Arabidopsis thaliana (Mouse-ear cress)).